Here is a 537-residue protein sequence, read N- to C-terminus: Cryptic loci regulator 2 (537 aa).

A disordered region spans residues 96–116 (VSARHVRPNPKSSKDTLEKQP). Positions 107–116 (SSKDTLEKQP) are enriched in basic and acidic residues.

As to quaternary structure, interacts with clr3.

It is found in the nucleus. Its subcellular location is the chromosome. The protein resides in the centromere. It localises to the telomere. In terms of biological role, required for deacetylation in the mating-type region and the centromere. Acts upstream of the histone deacetylases to promote transcriptional silencing. Required for proper positioning of nucleosomes at heterochromatic loci and for transcriptional gene silencing (TGS) function of the Snf2/Hdac-containing repressor complex (SHREC). This is Cryptic loci regulator 2 (clr2) from Schizosaccharomyces pombe (strain 972 / ATCC 24843) (Fission yeast).